Here is an 88-residue protein sequence, read N- to C-terminus: Large ribosomal subunit protein bL27 (88 aa).

A disordered region spans residues 1–21 (MAHKKAGGSSRNGRDSDGRRL).

Belongs to the bacterial ribosomal protein bL27 family.

The polypeptide is Large ribosomal subunit protein bL27 (Methylobacterium nodulans (strain LMG 21967 / CNCM I-2342 / ORS 2060)).